Reading from the N-terminus, the 154-residue chain is Iron sulfur cluster assembly protein 1, mitochondrial (154 aa).

This sequence belongs to the NifU family. In terms of assembly, component of the core Fe-S cluster (ISC) assembly machinery. [2Fe-2S] cluster serves as cofactor.

The protein localises to the mitochondrion matrix. It functions in the pathway cofactor biosynthesis; iron-sulfur cluster biosynthesis. In terms of biological role, scaffold protein for the de novo synthesis of iron-sulfur (Fe-S) clusters within mitochondria, which is required for maturation of both mitochondrial and cytoplasmic [2Fe-2S] and [4Fe-4S] proteins. First, a [2Fe-2S] cluster is transiently assembled on the scaffold protein ISU1. In a second step, the cluster is released from ISU1, transferred to a glutaredoxin, followed by the formation of mitochondrial [2Fe-2S] proteins, the synthesis of [4Fe-4S] clusters and their target-specific insertion into the recipient apoproteins. Cluster assembly on ISU1 depends on the function of the cysteine desulfurase complex NFS1-ISD11, which serves as the sulfur donor for cluster synthesis, the iron-binding protein frataxin as the putative iron donor, and the electron transfer chain comprised of ferredoxin reductase and ferredoxin, which receive their electrons from NADH. This chain is Iron sulfur cluster assembly protein 1, mitochondrial (ISU1), found in Eremothecium gossypii (strain ATCC 10895 / CBS 109.51 / FGSC 9923 / NRRL Y-1056) (Yeast).